Reading from the N-terminus, the 409-residue chain is SPI-1 type 3 secretion system translocon protein SctB (409 aa).

The chain crosses the membrane as a helical span at residues 119-140 (ISGMSSSAVALLAAANTLMLTL).

It belongs to the SctB/SipC family. As to quaternary structure, the core secretion machinery of the T3SS is composed of approximately 20 different proteins, including cytoplasmic components, a base, an export apparatus and a needle. This subunit is involved in the formation of a pore, called the translocon, in host membrane.

The protein resides in the secreted. It localises to the host membrane. In terms of biological role, component of the type III secretion system 1 (SPI-1 T3SS), also called injectisome, which is used to inject bacterial effector proteins into eukaryotic host cells. SipB/SctE1 and SipC/SctB1 are inserted into the host membrane where they form a pore and allow the translocation of effector proteins into the cytosol of target cells. The polypeptide is SPI-1 type 3 secretion system translocon protein SctB (Salmonella typhimurium (strain 14028s / SGSC 2262)).